A 235-amino-acid chain; its full sequence is MAYARALLKLSGEALMGDQGYGIDPAIVQAIAKDVAGVVASGTQLAIVVGGGNIFRGLKGSAAGMDRATADYVGMLATVMNAITLQDGLERAGIPTRVQTAIEMQEVAEPYIRRRAIRHLEKGRVVVFGAGCGNPFFTTDTTAALRAAEISADVVFKATKVDGVYDKDPHKYADAVRYDTLTFQQVLSGELAVMDSTAIALCKDNNIPIVVFNLFEAGNIGRAVAGEPIGSRISN.

9-12 (KLSG) is a binding site for ATP. The segment at 17–22 (GDQGYG) is involved in allosteric activation by GTP. A UMP-binding site is contributed by glycine 51. Residues glycine 52 and arginine 56 each coordinate ATP. Residues aspartate 71 and 132-139 (CGNPFFTT) each bind UMP. ATP-binding residues include threonine 159, tyrosine 165, and aspartate 168.

This sequence belongs to the UMP kinase family. In terms of assembly, homohexamer.

Its subcellular location is the cytoplasm. It carries out the reaction UMP + ATP = UDP + ADP. The protein operates within pyrimidine metabolism; CTP biosynthesis via de novo pathway; UDP from UMP (UMPK route): step 1/1. With respect to regulation, allosterically activated by GTP. Inhibited by UTP. Catalyzes the reversible phosphorylation of UMP to UDP. The protein is Uridylate kinase of Synechococcus sp. (strain WH7803).